The following is a 322-amino-acid chain: Ribosomal RNA small subunit methyltransferase H (322 aa).

S-adenosyl-L-methionine is bound by residues 42–44 (GGH), aspartate 62, phenylalanine 86, aspartate 107, and glutamine 114.

Belongs to the methyltransferase superfamily. RsmH family.

Its subcellular location is the cytoplasm. It carries out the reaction cytidine(1402) in 16S rRNA + S-adenosyl-L-methionine = N(4)-methylcytidine(1402) in 16S rRNA + S-adenosyl-L-homocysteine + H(+). Functionally, specifically methylates the N4 position of cytidine in position 1402 (C1402) of 16S rRNA. In Janthinobacterium sp. (strain Marseille) (Minibacterium massiliensis), this protein is Ribosomal RNA small subunit methyltransferase H.